An 86-amino-acid chain; its full sequence is Small ribosomal subunit protein bS20 (86 aa).

The protein belongs to the bacterial ribosomal protein bS20 family.

In terms of biological role, binds directly to 16S ribosomal RNA. The chain is Small ribosomal subunit protein bS20 from Mycolicibacterium gilvum (strain PYR-GCK) (Mycobacterium gilvum (strain PYR-GCK)).